Here is a 116-residue protein sequence, read N- to C-terminus: Ig heavy chain V region 441 (116 aa).

The signal sequence occupies residues 1–18 (MDFGLIFFIVALLKGVQC). The Ig-like domain occupies 19-116 (EVKLLESGGG…EDTALYYCAR (98 aa)).

This is Ig heavy chain V region 441 from Mus musculus (Mouse).